The following is a 132-amino-acid chain: UPF0047 protein YugU (132 aa).

It belongs to the UPF0047 family.

The protein is UPF0047 protein YugU (yugU) of Bacillus subtilis (strain 168).